Consider the following 407-residue polypeptide: Phospholipid-transporting ATPase accessory subunit CDC50 (407 aa).

Residues 1 to 33 (MAPRRRRGAGQDGSDDGRSDSDAPKNRPPNTAF) form a disordered region. At 1–48 (MAPRRRRGAGQDGSDDGRSDSDAPKNRPPNTAFRQQRMRAWQCVLTPK) the chain is on the cytoplasmic side. Residues 15-25 (DDGRSDSDAPK) show a composition bias toward basic and acidic residues. A helical transmembrane segment spans residues 49 to 69 (LIVTVFSILAAIYLGFGAWLT). Residues 70–359 (YLAHTVRDLK…TMGSRNIWPG (290 aa)) are Extracellular-facing. Cys85 and Cys139 form a disulfide bridge. N-linked (GlcNAc...) asparagine glycosylation is found at Asn131 and Asn189. Cysteines 193 and 210 form a disulfide. Asn219, Asn232, Asn241, and Asn314 each carry an N-linked (GlcNAc...) asparagine glycan. The helical transmembrane segment at 360-380 (IIFLIVGGICLVLDIYFILSF) threads the bilayer. At 381 to 407 (FIWRPRKLGDPSYLSWNQPSAPGGHSS) the chain is on the cytoplasmic side.

Belongs to the CDC50/LEM3 family. As to quaternary structure, component of a flippase complex consisting of DNF1 and CDC50. Interacts with DNF1; the interaction is direct.

It localises to the cell membrane. Functionally, accessory component of a P4-ATPase flippase complex which catalyzes the hydrolysis of ATP coupled to the transport of phosphatidylcholine and phosphatidylserine from the lumen to the cytosolic leaflet of membranes and ensures the maintenance of asymmetric distribution of phospholipids. The polypeptide is Phospholipid-transporting ATPase accessory subunit CDC50 (Chaetomium thermophilum (strain DSM 1495 / CBS 144.50 / IMI 039719) (Thermochaetoides thermophila)).